Reading from the N-terminus, the 523-residue chain is 2-isopropylmalate synthase (523 aa).

A Pyruvate carboxyltransferase domain is found at 12–274; sequence VVIFDTTLRD…WNKIDTTQLT (263 aa). Mn(2+) is bound by residues D21, H209, H211, and N245. Residues 398 to 523 form a regulatory domain region; the sequence is KLLSLSVIAG…AQGAAAAAAS (126 aa).

Belongs to the alpha-IPM synthase/homocitrate synthase family. LeuA type 1 subfamily. As to quaternary structure, homodimer. Requires Mn(2+) as cofactor.

Its subcellular location is the cytoplasm. The enzyme catalyses 3-methyl-2-oxobutanoate + acetyl-CoA + H2O = (2S)-2-isopropylmalate + CoA + H(+). Its pathway is amino-acid biosynthesis; L-leucine biosynthesis; L-leucine from 3-methyl-2-oxobutanoate: step 1/4. Catalyzes the condensation of the acetyl group of acetyl-CoA with 3-methyl-2-oxobutanoate (2-ketoisovalerate) to form 3-carboxy-3-hydroxy-4-methylpentanoate (2-isopropylmalate). The protein is 2-isopropylmalate synthase of Bradyrhizobium sp. (strain BTAi1 / ATCC BAA-1182).